We begin with the raw amino-acid sequence, 238 residues long: Ubiquinone biosynthesis O-methyltransferase (238 aa).

S-adenosyl-L-methionine-binding residues include R40, G59, D80, and M124.

The protein belongs to the methyltransferase superfamily. UbiG/COQ3 family.

It catalyses the reaction a 3-demethylubiquinol + S-adenosyl-L-methionine = a ubiquinol + S-adenosyl-L-homocysteine + H(+). It carries out the reaction a 3-(all-trans-polyprenyl)benzene-1,2-diol + S-adenosyl-L-methionine = a 2-methoxy-6-(all-trans-polyprenyl)phenol + S-adenosyl-L-homocysteine + H(+). The protein operates within cofactor biosynthesis; ubiquinone biosynthesis. Functionally, O-methyltransferase that catalyzes the 2 O-methylation steps in the ubiquinone biosynthetic pathway. The chain is Ubiquinone biosynthesis O-methyltransferase from Ralstonia nicotianae (strain ATCC BAA-1114 / GMI1000) (Ralstonia solanacearum).